A 292-amino-acid chain; its full sequence is Oxidative stress-responsive serine-rich protein 1 (292 aa).

Positions 24-178 (ASGSVASLSV…ATQVPQASLK (155 aa)) are disordered. Over residues 65-83 (STRKSSRGAVRTQRRRRSK) the composition is skewed to basic residues. 2 positions are modified to phosphothreonine: T143 and T233.

In Homo sapiens (Human), this protein is Oxidative stress-responsive serine-rich protein 1 (OSER1).